We begin with the raw amino-acid sequence, 91 residues long: Cell division topological specificity factor (91 aa).

Belongs to the MinE family.

Prevents the cell division inhibition by proteins MinC and MinD at internal division sites while permitting inhibition at polar sites. This ensures cell division at the proper site by restricting the formation of a division septum at the midpoint of the long axis of the cell. The protein is Cell division topological specificity factor of Desulfitobacterium hafniense (strain DSM 10664 / DCB-2).